A 507-amino-acid chain; its full sequence is F-box only protein 31 (507 aa).

The tract at residues 19–42 (RQQRRGPAETAAADSEADTDPEEE) is disordered. Phosphoserine is present on Ser-33. The span at 33 to 42 (SEADTDPEEE) shows a compositional bias: acidic residues. Phosphothreonine is present on Thr-37. Positions 50–55 (RCSLLE) match the D box motif. The F-box domain maps to 50–96 (RCSLLELPPELLVEIFASLPGTDLPSLAQVCSRFRRILHTDTIWRRR). Zn(2+)-binding residues include Cys-192, His-200, Cys-216, and His-222. Ser-264 carries the post-translational modification Phosphoserine; by ATM. The DDL motif signature appears at 283–285 (DDL). The segment at 364–421 (RQEQEAGEGPAPHREPAVKDPEGPPAKASKEAGPGAEAAEQSSTSGQGQPFVLPAGVS) is disordered. Residues 374-385 (APHREPAVKDPE) show a composition bias toward basic and acidic residues. Ser-448 carries the post-translational modification Phosphoserine.

It belongs to the FBXO31 family. As to quaternary structure, part of a SCF (SKP1-cullin-F-box) protein ligase complex SCF(FBXO31) composed of CUL1, SKP1, RBX1 and FBXO31. Interacts (when phosphorylated at Ser-33) with CDC20, promoting ubiquitination by the APC/C complex. Post-translationally, phosphorylation at Ser-264 by ATM following gamma-irradiation results in its stabilization. Phosphorylation at Ser-448 in absence of stress promotes its ubiquitination and degradation by the SCF(FBXO46) complex. Phosphorylation at Ser-33 by AKT1 promotes association with CDC20 and ubiquitination by the APC/C complex. In terms of processing, ubiquitinated by the SCF(FBXO46) complex in absence of stress, promoting its degradation. Ubiquitinated by the APC/C complex following phosphorylation at Ser-33, leading to its degradation by the proteasome.

It localises to the cytoplasm. It is found in the cytoskeleton. The protein localises to the microtubule organizing center. Its subcellular location is the centrosome. It participates in protein modification; protein ubiquitination. Substrate-recognition component of the SCF(FBXO31) protein ligase complex, which specifically mediates the ubiquitination of proteins amidated at their C-terminus in response to oxidative stress, leading to their degradation by the proteasome. FBXO31 specifically recognizes and binds C-terminal peptides bearing an amide: C-terminal amidation in response to oxidative stress takes place following protein fragmentation. The SCF(FBXO31) also plays a role in G1 arrest following DNA damage by mediating ubiquitination of phosphorylated cyclin-D1 (CCND1), promoting its degradation by the proteasome, resulting in G1 arrest. The SCF(FBXO31) complex is however not a major regulator of CCND1 stability during the G1/S transition. In response to genotoxic stress, the SCF(FBXO31) complex directs ubiquitination and degradation of phosphorylated MDM2, thereby promoting p53/TP53-mediated DNA damage response. SCF(FBXO31) complex is required for genomic integrity by catalyzing ubiquitination and degradation of cyclin-A (CCNA1 and/or CCNA2) during the G1 phase. In response to genotoxic stress, the SCF(FBXO31) complex directs ubiquitination and degradation of phosphorylated FBXO46 and MAP2K6. SCF(FBXO31) complex promotes ubiquitination and degradation of CDT1 during the G2 phase to prevent re-replication. The SCF(FBXO31) complex also mediates ubiquitination and degradation of DUSP6, OGT and PARD6A. This chain is F-box only protein 31, found in Rattus norvegicus (Rat).